The following is a 558-amino-acid chain: MAKFVFVTGGVVSSIGKGIVAASLGRLLKSRGYSVSILKLDPYLNVDPGTMSPFQHGEVFVTEDGAETDLDLGHYERFTDTAMSRLNSVTTGSIYQAVINKERRGDYNGGTVQVIPHITGEIRERIHRVAANSGADVVITEIGGTVGDIESLPFLEAIREFRGDVGRNDLAYIHVTLLPFIGTSGELKTKPTQHSVKELRAIGIQPDVLVCRSDRPINEDLKRKIGGFCGVPNRAVIPALDADSIYAVPISLEEEGLCLEMLDVLNLTDHDSDMKNWVQLVHKLRNPGPAVKVALVGKYVQLNDAYLSVVEALRHACLTQDASLELSWVCAEQIETHGPENLLKGMDAVVVPGGFGNRGVDGKIAAIRWAREQRVPFLGLCLGMQCAVIEWARNQAGLTGASSAELEPDTSHPVIHLLPEQQDVVDLGGTMRLGVYPCRIAPDTLAQKLYGEEVVYERHRHRYEFNNSYRNLFIESGYTISGSSPDGRLVELIELKGHPFFTACQYHPEFLSRPGKPHPLFRGLIEAAQLRLPASPDEALRRQSQTNISAQEKPSRIG.

The interval 1–267 is amidoligase domain; it reads MAKFVFVTGG…CLEMLDVLNL (267 aa). Position 13 (S13) interacts with CTP. Residue S13 participates in UTP binding. ATP-binding positions include 14–19 and D71; that span reads SIGKGI. Mg(2+) is bound by residues D71 and E141. CTP is bound by residues 148-150, 188-193, and K224; these read DIE and KTKPTQ. Residues 188 to 193 and K224 each bind UTP; that span reads KTKPTQ. One can recognise a Glutamine amidotransferase type-1 domain in the interval 292–534; sequence KVALVGKYVQ…IEAAQLRLPA (243 aa). G354 serves as a coordination point for L-glutamine. C381 (nucleophile; for glutamine hydrolysis) is an active-site residue. Residues 382-385, E405, and R462 each bind L-glutamine; that span reads LGMQ. Catalysis depends on residues H507 and E509. The interval 536–558 is disordered; sequence PDEALRRQSQTNISAQEKPSRIG. The segment covering 542-552 has biased composition (polar residues); the sequence is RQSQTNISAQE.

Belongs to the CTP synthase family. Homotetramer.

It carries out the reaction UTP + L-glutamine + ATP + H2O = CTP + L-glutamate + ADP + phosphate + 2 H(+). The enzyme catalyses L-glutamine + H2O = L-glutamate + NH4(+). It catalyses the reaction UTP + NH4(+) + ATP = CTP + ADP + phosphate + 2 H(+). It participates in pyrimidine metabolism; CTP biosynthesis via de novo pathway; CTP from UDP: step 2/2. Its activity is regulated as follows. Allosterically activated by GTP, when glutamine is the substrate; GTP has no effect on the reaction when ammonia is the substrate. The allosteric effector GTP functions by stabilizing the protein conformation that binds the tetrahedral intermediate(s) formed during glutamine hydrolysis. Inhibited by the product CTP, via allosteric rather than competitive inhibition. Functionally, catalyzes the ATP-dependent amination of UTP to CTP with either L-glutamine or ammonia as the source of nitrogen. Regulates intracellular CTP levels through interactions with the four ribonucleotide triphosphates. The protein is CTP synthase of Prochlorococcus marinus (strain MIT 9303).